Reading from the N-terminus, the 271-residue chain is Endonuclease V (271 aa).

A disordered region spans residues 46 to 67 (TRTGDAPDVDQTTLSTSADDRT). Residues aspartate 76 and aspartate 140 each contribute to the Mg(2+) site.

This sequence belongs to the endonuclease V family. Requires Mg(2+) as cofactor.

It localises to the cytoplasm. It catalyses the reaction Endonucleolytic cleavage at apurinic or apyrimidinic sites to products with a 5'-phosphate.. Functionally, DNA repair enzyme involved in the repair of deaminated bases. Selectively cleaves double-stranded DNA at the second phosphodiester bond 3' to a deoxyinosine leaving behind the intact lesion on the nicked DNA. The polypeptide is Endonuclease V (Haloarcula marismortui (strain ATCC 43049 / DSM 3752 / JCM 8966 / VKM B-1809) (Halobacterium marismortui)).